The sequence spans 283 residues: NFU1 iron-sulfur cluster scaffold homolog, mitochondrial (283 aa).

Residues 1–30 constitute a mitochondrion transit peptide; it reads MSKFLSQAALNTLRNTRLGSRQLVRSFAGI. The nifU stretch occupies residues 182–250; it reads IKELLDTRIR…IPEVESVEQV (69 aa). [4Fe-4S] cluster is bound by residues cysteine 219 and cysteine 222.

Belongs to the NifU family.

The protein resides in the mitochondrion. Molecular scaffold for [Fe-S] cluster assembly of mitochondrial iron-sulfur proteins. The sequence is that of NFU1 iron-sulfur cluster scaffold homolog, mitochondrial from Drosophila erecta (Fruit fly).